Consider the following 281-residue polypeptide: sn-glycerol-3-phosphate transport system permease protein UgpE (281 aa).

Transmembrane regions (helical) follow at residues 16-36 (LILG…AATL), 85-105 (FSIT…IVWF), 113-133 (FFWM…FPTV), 142-162 (LDSY…TFLF), 202-222 (ALFV…LLII), and 247-267 (WNSV…IVLV). An ABC transmembrane type-1 domain is found at 77 to 268 (LLNSFVMAFS…IPPVVIVLVM (192 aa)).

The protein belongs to the binding-protein-dependent transport system permease family. UgpAE subfamily. The complex is composed of two ATP-binding proteins (UgpC), two transmembrane proteins (UgpA and UgpE) and a solute-binding protein (UgpB).

It is found in the cell inner membrane. In terms of biological role, part of the ABC transporter complex UgpBAEC involved in sn-glycerol-3-phosphate (G3P) import. Probably responsible for the translocation of the substrate across the membrane. Can also transport glycerophosphoryl diesters, which are hydrolyzed to G3P and alcohol during transport. The G3P moiety can be detected in the cytoplasm whereas the corresponding alcohol is usually found in the culture medium. It was proposed by Yang et al that the complex could also transport glycerol-2-phosphate (G2P) in vivo, but it was shown later by Wuttge et al that UgpB does not bind G2P, questioning this transport activity. G2P might be converted in the periplasm to G3P before its transport. The protein is sn-glycerol-3-phosphate transport system permease protein UgpE of Escherichia coli (strain K12).